We begin with the raw amino-acid sequence, 214 residues long: Phosphatidyl-N-methylethanolamine N-methyltransferase (214 aa).

The Lumenal segment spans residues 1-19; the sequence is MPLVALGVADLFNFVDYSK. Residues 20–40 constitute an intramembrane region (helical); the sequence is TSLAISAAAIAFNPTFWNIVA. Topologically, residues 41-52 are lumenal; that stretch reads RREYRTKFLTRA. Residues 53-74 form a helical membrane-spanning segment; the sequence is FGGNAQVACYFLAVTIFGLGLV. At 75–101 the chain is on the cytoplasmic side; it reads RDFLYERALRDQPSHPLLEGTYVKYAA. A helical membrane pass occupies residues 102-122; sequence YALLALGNLLVITSTMRLGIT. 106–108 is an S-adenosyl-L-methionine binding site; that stretch reads ALG. At 123 to 165 the chain is on the lumenal side; sequence GTFLGDYFGILMDGIVTGFPFNVTSAPMYYGSTMSFLGTALLY. A helical transmembrane segment spans residues 166-186; the sequence is GKPAGLLLTAWVLFVYIIAIQ. Over 187-214 the chain is Cytoplasmic; it reads FENPFTAEIYAKRDRERAKAAGTSKKEL. 188–189 lines the S-adenosyl-L-methionine pocket; sequence EN.

Belongs to the class VI-like SAM-binding methyltransferase superfamily. PEMT/PEM2 methyltransferase family.

The protein resides in the endoplasmic reticulum membrane. The protein localises to the mitochondrion membrane. It carries out the reaction a 1,2-diacyl-sn-glycero-3-phospho-N-methylethanolamine + S-adenosyl-L-methionine = a 1,2-diacyl-sn-glycero-3-phospho-N,N-dimethylethanolamine + S-adenosyl-L-homocysteine + H(+). The enzyme catalyses a 1,2-diacyl-sn-glycero-3-phospho-N,N-dimethylethanolamine + S-adenosyl-L-methionine = a 1,2-diacyl-sn-glycero-3-phosphocholine + S-adenosyl-L-homocysteine + H(+). It participates in phospholipid metabolism; phosphatidylcholine biosynthesis. Catalyzes the second two steps of the methylation pathway of phosphatidylcholine biosynthesis, the SAM-dependent methylation of phosphatidylmonomethylethanolamine (PMME) to phosphatidyldimethylethanolamine (PDME) and of PDME to phosphatidylcholine (PC). In Neurospora crassa (strain ATCC 24698 / 74-OR23-1A / CBS 708.71 / DSM 1257 / FGSC 987), this protein is Phosphatidyl-N-methylethanolamine N-methyltransferase.